A 386-amino-acid chain; its full sequence is Short integuments 2, mitochondrial (386 aa).

The CP-type G domain maps to 37 to 207 (TRAIRNRLKL…VLDSPGVLVP (171 aa)). Positions 55–59 (DARIP) match the DARXP motif motif. The G4 stretch occupies residues 81 to 84 (NKKD). GTP contacts are provided by residues 81–84 (NKKD), 109–110 (NA), and 146–151 (NVGKSA). A G5 region spans residues 109 to 111 (NAH). The segment at 143–150 (GVPNVGKS) is G1. Residues 180–184 (GVTQD) are G2. Residues 200–203 (DSPG) are G3. Gly203 is a GTP binding site.

Belongs to the TRAFAC class YlqF/YawG GTPase family. MTG1 subfamily. Expressed in seedlings, roots, leaves, stems, inflorescences and siliques.

It localises to the mitochondrion. Functionally, GTPase that may function in mitochondrial ribosome assembly. Involved in a variety of growth processes during vegetative development and promotes growth and cell division in the developing integuments. This is Short integuments 2, mitochondrial from Arabidopsis thaliana (Mouse-ear cress).